The sequence spans 555 residues: Glutamine--tRNA ligase (555 aa).

The 'HIGH' region motif lies at 34-44 (PEPNGYLHIGH). ATP-binding positions include 35–37 (EPN) and 41–47 (HIGHAKS). Residues Asp-67 and Tyr-212 each contribute to the L-glutamine site. Residues Thr-231, 261-262 (RL), and 269-271 (MSK) contribute to the ATP site. The short motif at 268–272 (VMSKR) is the 'KMSKS' region element. Residues 317-324 (TKQDNTIE) form an interaction with tRNA region.

This sequence belongs to the class-I aminoacyl-tRNA synthetase family. In terms of assembly, monomer.

Its subcellular location is the cytoplasm. It carries out the reaction tRNA(Gln) + L-glutamine + ATP = L-glutaminyl-tRNA(Gln) + AMP + diphosphate. In Salmonella agona (strain SL483), this protein is Glutamine--tRNA ligase.